The chain runs to 376 residues: Lipoprotein p33 (376 aa).

A signal peptide spans 1–30 (MKIKKIKLLKALALTGAFGIVATVPVIVSS). Residue Cys-31 is the site of N-palmitoyl cysteine attachment. The S-diacylglycerol cysteine moiety is linked to residue Cys-31. Residues 33–59 (STDNNGGTGDNNTGGGGSGTDQQQGTT) form a disordered region. Positions 38-51 (GGTGDNNTGGGGSG) are enriched in gly residues.

This sequence belongs to the p35 lipoprotein family.

The protein localises to the cell membrane. The sequence is that of Lipoprotein p33 from Malacoplasma penetrans (strain HF-2) (Mycoplasma penetrans).